A 422-amino-acid chain; its full sequence is Inhibitor of growth protein 1 (422 aa).

Positions 261–349 (ELGDTAGNSG…EASPADLPID (89 aa)) are disordered. Residue Lys-278 forms a Glycyl lysine isopeptide (Lys-Gly) (interchain with G-Cter in SUMO2) linkage. Over residues 297–314 (RNNENRENASSNHDHDDG) the composition is skewed to basic and acidic residues. Positions 322 to 334 (KKAKTSKKKKRSK) are enriched in basic residues. The PHD-type zinc finger occupies 353–402 (PTYCLCNQVSYGEMIGCDNDECPIEWFHFSCVGLNHKPKGKWYCPKCRGE). Zn(2+) contacts are provided by Cys-356, Cys-358, Cys-369, Cys-374, His-380, Cys-383, Cys-396, and Cys-399. A PBR region spans residues 405 to 422 (KTMDKALEKSKKERAYNR).

The protein belongs to the ING family. In terms of assembly, interacts with H3K4me3 and to a lesser extent with H3K4me2. Interacts with TP53. Isoform 2 interacts with RSL1D1. In terms of tissue distribution, isoform 2 was expressed in all normal tissues and cells examined, as well as in all breast cancer and melanoma cell lines examined. Isoform 3 was expressed in testis, liver, and kidney, weakly expressed in colon and brain and not expressed in breast and cultured melanocytes. Isoform 4 was highly expressed in testis and weakly expressed in brain, but not expressed in breast, colon, kidney, melanocytes, breast cancer or melanoma cell lines.

The protein resides in the nucleus. Functionally, cooperates with p53/TP53 in the negative regulatory pathway of cell growth by modulating p53-dependent transcriptional activation. Implicated as a tumor suppressor gene. The polypeptide is Inhibitor of growth protein 1 (ING1) (Homo sapiens (Human)).